The following is a 168-amino-acid chain: 3-hydroxyacyl-[acyl-carrier-protein] dehydratase FabZ (168 aa).

The active site involves histidine 54.

This sequence belongs to the thioester dehydratase family. FabZ subfamily.

The protein localises to the cytoplasm. It catalyses the reaction a (3R)-hydroxyacyl-[ACP] = a (2E)-enoyl-[ACP] + H2O. In terms of biological role, involved in unsaturated fatty acids biosynthesis. Catalyzes the dehydration of short chain beta-hydroxyacyl-ACPs and long chain saturated and unsaturated beta-hydroxyacyl-ACPs. This Yersinia enterocolitica serotype O:8 / biotype 1B (strain NCTC 13174 / 8081) protein is 3-hydroxyacyl-[acyl-carrier-protein] dehydratase FabZ.